The chain runs to 1091 residues: Protein CTR9 homolog (1091 aa).

Alanine 2 bears the N-acetylalanine mark. 16 TPR repeats span residues 90 to 127 (GAYY…DMHE), 128 to 161 (PSTW…APDN), 163 to 195 (PALL…FPGC), 197 to 230 (AAVR…DPDN), 232 to 267 (EALV…YPYC), 305 to 338 (SHSF…TNNN), 343 to 376 (VFPY…YPDN), 377 to 410 (CETL…DPRD), 412 to 443 (QAFV…MKKG), 449 to 482 (IEVL…GIWI), 558 to 591 (IDAY…DDKN), 593 to 625 (NALS…TDGK), 640 to 673 (AAMR…HNSN), 674 to 707 (MYAA…ASGS), 713 to 746 (PDVW…FFYN), and 749 to 782 (SQIL…TPSN). Positions 919–1091 (FQRIKEQWKS…EEEEEEEEAN (173 aa)) are disordered. Basic residues predominate over residues 951-965 (ERRRKKGGKRRKKDK). Composition is skewed to acidic residues over residues 974–993 (DDEE…DEDA), 1003–1016 (MTTQ…DDDA), 1026–1035 (EDPDVDDDEV), and 1080–1091 (NMEEEEEEEEAN).

Component of the nuclear PAF1 complex (PAF1C), which consists of VIP2/ELF7/PAF1, VIP3/SKI8/WDR61, VIP4/LEO1, VIP5/RTF1, VIP6/ELF8/CTR9 and CDC73. Interacts with VIP3 and VIP4. As to expression, expressed in roots, leaves and shoot apex.

Its subcellular location is the nucleus. In terms of biological role, component of the PAF1 complex (PAF1C) which is involved in histone modifications such as methylation on histone H3 'Lys-4' (H3K4me3). Involved in regulation of flowering time. Required for the expression of the MADS box genes and flowering repressors FLC, AGL27/FLM and AGL31/MAF2. Required for histone H3 trimethylation on 'Lys-4' H3K4me3 at the FLC and AGL27/FLM loci. Involved in the control of seed dormancy and germination. The protein is Protein CTR9 homolog of Arabidopsis thaliana (Mouse-ear cress).